We begin with the raw amino-acid sequence, 72 residues long: Mitochondrial import receptor subunit TOM7-1 (72 aa).

Topologically, residues 2 to 41 are cytoplasmic; it reads LKPKGKNTKKAAAADEDDGAVAVVGKFVKEWGTWTAKKAK. Residues 42–59 traverse the membrane as a helical segment; the sequence is VITHYGFIPLVIIIGMNS. Over 60–72 the chain is Mitochondrial intermembrane; that stretch reads EPKPSLSQLLSPV.

The protein belongs to the Tom7 family. As to quaternary structure, forms part of the preprotein translocase complex of the outer mitochondrial membrane (TOM complex).

Its subcellular location is the mitochondrion outer membrane. In terms of biological role, seems to act as a modulator of the dynamics of the mitochondrial protein transport machinery. Seems to promote the dissociation of subunits of the outer membrane translocase. The protein is Mitochondrial import receptor subunit TOM7-1 (TOM7-1) of Solanum tuberosum (Potato).